Reading from the N-terminus, the 67-residue chain is DNA-directed RNA polymerase subunit omega (67 aa).

It belongs to the RNA polymerase subunit omega family. The RNAP catalytic core consists of 2 alpha, 1 beta, 1 beta' and 1 omega subunit. When a sigma factor is associated with the core the holoenzyme is formed, which can initiate transcription.

It carries out the reaction RNA(n) + a ribonucleoside 5'-triphosphate = RNA(n+1) + diphosphate. Functionally, promotes RNA polymerase assembly. Latches the N- and C-terminal regions of the beta' subunit thereby facilitating its interaction with the beta and alpha subunits. The protein is DNA-directed RNA polymerase subunit omega of Nautilia profundicola (strain ATCC BAA-1463 / DSM 18972 / AmH).